A 23-amino-acid chain; its full sequence is Glutamine synthetase (23 aa).

This sequence belongs to the glutamine synthetase family. Oligomer of 12 subunits arranged in the form of two hexagons. Requires Mg(2+) as cofactor.

The protein resides in the cytoplasm. The enzyme catalyses L-glutamate + NH4(+) + ATP = L-glutamine + ADP + phosphate + H(+). With respect to regulation, the activity of this enzyme could be controlled by adenylation under conditions of abundant glutamine. In terms of biological role, involved in nitrogen metabolism via ammonium assimilation. Catalyzes the ATP-dependent biosynthesis of glutamine from glutamate and ammonia. This chain is Glutamine synthetase, found in Phormidium lapideum.